Consider the following 239-residue polypeptide: LexA repressor (239 aa).

The H-T-H motif DNA-binding region spans 26 to 46 (FDEMKDALDLASKSGIHRLIT). Catalysis depends on for autocatalytic cleavage activity residues Ser-159 and Lys-197.

The protein belongs to the peptidase S24 family. Homodimer.

The enzyme catalyses Hydrolysis of Ala-|-Gly bond in repressor LexA.. In terms of biological role, represses a number of genes involved in the response to DNA damage (SOS response), including recA and lexA. In the presence of single-stranded DNA, RecA interacts with LexA causing an autocatalytic cleavage which disrupts the DNA-binding part of LexA, leading to derepression of the SOS regulon and eventually DNA repair. This Rhizobium etli (strain CIAT 652) protein is LexA repressor.